We begin with the raw amino-acid sequence, 413 residues long: Multidrug resistance protein MdtA (413 aa).

Residues 1-20 (MKGSNTFRWAIAIGVVVAAA) form the signal peptide. 2 disordered regions span residues 31-57 (SPTAAPGVAAQAPHTASAGRRGMRDGP) and 391-413 (EPQTTVADEKSPSRHEGQKGARA). Residues 397-413 (ADEKSPSRHEGQKGARA) show a composition bias toward basic and acidic residues.

The protein belongs to the membrane fusion protein (MFP) (TC 8.A.1) family. As to quaternary structure, part of a tripartite efflux system composed of MdtA, MdtB and MdtC.

It is found in the cell inner membrane. The protein is Multidrug resistance protein MdtA of Salmonella typhimurium (strain LT2 / SGSC1412 / ATCC 700720).